The chain runs to 113 residues: Ig heavy chain V-III region E109 (113 aa).

The 113-residue stretch at 1–113 (EVKLEESGGG…YWGQGTLVTV (113 aa)) folds into the Ig-like domain. Cysteine 22 and cysteine 98 are oxidised to a cystine.

The polypeptide is Ig heavy chain V-III region E109 (Mus musculus (Mouse)).